Consider the following 269-residue polypeptide: Energy-coupling factor transporter ATP-binding protein EcfA1 (269 aa).

The ABC transporter domain maps to 8 to 242; it reads IEFKDVSFQY…EEALISVGLD (235 aa). An ATP-binding site is contributed by 42-49; sequence GHNGSGKS.

It belongs to the ABC transporter superfamily. Energy-coupling factor EcfA family. Forms a stable energy-coupling factor (ECF) transporter complex composed of 2 membrane-embedded substrate-binding proteins (S component), 2 ATP-binding proteins (A component) and 2 transmembrane proteins (T component).

The protein resides in the cell membrane. In terms of biological role, ATP-binding (A) component of a common energy-coupling factor (ECF) ABC-transporter complex. Unlike classic ABC transporters this ECF transporter provides the energy necessary to transport a number of different substrates. The polypeptide is Energy-coupling factor transporter ATP-binding protein EcfA1 (Staphylococcus epidermidis (strain ATCC 35984 / DSM 28319 / BCRC 17069 / CCUG 31568 / BM 3577 / RP62A)).